The sequence spans 316 residues: Pantothenate kinase (316 aa).

95-102 is an ATP binding site; it reads GSVAVGKS.

The protein belongs to the prokaryotic pantothenate kinase family.

The protein localises to the cytoplasm. It carries out the reaction (R)-pantothenate + ATP = (R)-4'-phosphopantothenate + ADP + H(+). The protein operates within cofactor biosynthesis; coenzyme A biosynthesis; CoA from (R)-pantothenate: step 1/5. This is Pantothenate kinase from Sodalis glossinidius (strain morsitans).